A 402-amino-acid chain; its full sequence is Elongation factor Tu (402 aa).

Positions 16-211 constitute a tr-type G domain; the sequence is KEHINIGTIG…AVDSYIDSPV (196 aa). The tract at residues 25–32 is G1; the sequence is GHVDHGKT. Residue 25 to 32 coordinates GTP; sequence GHVDHGKT. Thr-32 lines the Mg(2+) pocket. A G2 region spans residues 66-70; that stretch reads GITIN. The interval 87 to 90 is G3; the sequence is DCPG. Residues 87 to 91 and 142 to 145 each bind GTP; these read DCPGH and NKID. The tract at residues 142-145 is G4; the sequence is NKID. A G5 region spans residues 181–183; that stretch reads SAR.

This sequence belongs to the TRAFAC class translation factor GTPase superfamily. Classic translation factor GTPase family. EF-Tu/EF-1A subfamily. As to quaternary structure, monomer.

The protein localises to the cytoplasm. It carries out the reaction GTP + H2O = GDP + phosphate + H(+). GTP hydrolase that promotes the GTP-dependent binding of aminoacyl-tRNA to the A-site of ribosomes during protein biosynthesis. In Mesomycoplasma hyopneumoniae (strain J / ATCC 25934 / NCTC 10110) (Mycoplasma hyopneumoniae), this protein is Elongation factor Tu.